The chain runs to 78 residues: Large ribosomal subunit protein bL28 (78 aa).

Belongs to the bacterial ribosomal protein bL28 family.

The chain is Large ribosomal subunit protein bL28 (rpmB) from Xylella fastidiosa (strain 9a5c).